The chain runs to 390 residues: Chorismate synthase (390 aa).

Residues Arg-39 and Arg-45 each contribute to the NADP(+) site. FMN is bound by residues 132–134, 253–254, Gly-298, 313–317, and Arg-339; these read RSS, NA, and KPIPT.

It belongs to the chorismate synthase family. Homotetramer. It depends on FMNH2 as a cofactor.

It carries out the reaction 5-O-(1-carboxyvinyl)-3-phosphoshikimate = chorismate + phosphate. Its pathway is metabolic intermediate biosynthesis; chorismate biosynthesis; chorismate from D-erythrose 4-phosphate and phosphoenolpyruvate: step 7/7. Its function is as follows. Catalyzes the anti-1,4-elimination of the C-3 phosphate and the C-6 proR hydrogen from 5-enolpyruvylshikimate-3-phosphate (EPSP) to yield chorismate, which is the branch point compound that serves as the starting substrate for the three terminal pathways of aromatic amino acid biosynthesis. This reaction introduces a second double bond into the aromatic ring system. In Bacillus velezensis (strain DSM 23117 / BGSC 10A6 / LMG 26770 / FZB42) (Bacillus amyloliquefaciens subsp. plantarum), this protein is Chorismate synthase.